Reading from the N-terminus, the 290-residue chain is NAD kinase (290 aa).

The active-site Proton acceptor is D72. NAD(+)-binding positions include 72 to 73 (DG), 146 to 147 (NE), R174, D176, and 187 to 192 (TAYALS).

It belongs to the NAD kinase family. A divalent metal cation is required as a cofactor.

The protein resides in the cytoplasm. The enzyme catalyses NAD(+) + ATP = ADP + NADP(+) + H(+). Involved in the regulation of the intracellular balance of NAD and NADP, and is a key enzyme in the biosynthesis of NADP. Catalyzes specifically the phosphorylation on 2'-hydroxyl of the adenosine moiety of NAD to yield NADP. The polypeptide is NAD kinase (Methylococcus capsulatus (strain ATCC 33009 / NCIMB 11132 / Bath)).